A 108-amino-acid chain; its full sequence is Replication initiation control protein YabA (108 aa).

Zn(2+) is bound by residues H83, C85, C99, and C102.

Belongs to the YabA family. As to quaternary structure, homotetramer. Interacts with both DnaA and DnaN, acting as a bridge between these two proteins. Zn(2+) serves as cofactor.

The protein localises to the cytoplasm. Its subcellular location is the nucleoid. Involved in control of chromosome replication initiation. Inhibits the cooperative binding of DnaA to the oriC region, thus negatively regulating initiation of chromosome replication. Inhibits the ability of DnaA-ATP to form a helix on DNA; does not disassemble preformed DnaA-DNA helices. Decreases the residence time of DnaA on the chromosome at its binding sites (oriC, replication forks and promoter-binding sites). Tethers DnaA to the replication machinery via the DNA polymerase beta sliding clamp subunit (dnaN). Associates with oriC and other DnaA targets on the chromosome in a DnaA-dependent manner. This is Replication initiation control protein YabA from Lactococcus lactis subsp. cremoris (strain SK11).